A 335-amino-acid chain; its full sequence is Fructose-1,6-bisphosphatase class 1 (335 aa).

E92, D114, L116, and D117 together coordinate Mg(2+). Residues 117 to 120 (DGSS) and N209 contribute to the substrate site. Position 281 (E281) interacts with Mg(2+).

This sequence belongs to the FBPase class 1 family. In terms of assembly, homotetramer. Requires Mg(2+) as cofactor.

The protein resides in the cytoplasm. The catalysed reaction is beta-D-fructose 1,6-bisphosphate + H2O = beta-D-fructose 6-phosphate + phosphate. Its pathway is carbohydrate biosynthesis; gluconeogenesis. The polypeptide is Fructose-1,6-bisphosphatase class 1 (Nitrosococcus oceani (strain ATCC 19707 / BCRC 17464 / JCM 30415 / NCIMB 11848 / C-107)).